Here is a 243-residue protein sequence, read N- to C-terminus: Uridylate kinase (243 aa).

Position 15–18 (15–18 (KLSG)) interacts with ATP. The involved in allosteric activation by GTP stretch occupies residues 23 to 28 (GEEGFG). Gly-57 is a UMP binding site. The ATP site is built by Gly-58 and Arg-62. UMP is bound by residues Asp-77 and 138-145 (TGNPFCTT). The ATP site is built by Thr-165, Tyr-171, and Asp-174.

It belongs to the UMP kinase family. In terms of assembly, homohexamer.

It is found in the cytoplasm. It catalyses the reaction UMP + ATP = UDP + ADP. It functions in the pathway pyrimidine metabolism; CTP biosynthesis via de novo pathway; UDP from UMP (UMPK route): step 1/1. Allosterically activated by GTP. Inhibited by UTP. Functionally, catalyzes the reversible phosphorylation of UMP to UDP. The chain is Uridylate kinase from Shewanella denitrificans (strain OS217 / ATCC BAA-1090 / DSM 15013).